We begin with the raw amino-acid sequence, 167 residues long: Transcription factor E (167 aa).

An HTH TFE/IIEalpha-type domain is found at 8–90 (NDKVIRGYLI…LWHLDFSDVE (83 aa)).

The protein belongs to the TFE family. In terms of assembly, monomer. Interaction with RNA polymerase subunits RpoF and RpoE is necessary for Tfe stimulatory transcription activity. Able to interact with Tbp and RNA polymerase in the absence of DNA promoter. Interacts both with the preinitiation and elongation complexes.

Its function is as follows. Transcription factor that plays a role in the activation of archaeal genes transcribed by RNA polymerase. Facilitates transcription initiation by enhancing TATA-box recognition by TATA-box-binding protein (Tbp), and transcription factor B (Tfb) and RNA polymerase recruitment. Not absolutely required for transcription in vitro, but particularly important in cases where Tbp or Tfb function is not optimal. It dynamically alters the nucleic acid-binding properties of RNA polymerases by stabilizing the initiation complex and destabilizing elongation complexes. Seems to translocate with the RNA polymerase following initiation and acts by binding to the non template strand of the transcription bubble in elongation complexes. This Methanosarcina acetivorans (strain ATCC 35395 / DSM 2834 / JCM 12185 / C2A) protein is Transcription factor E.